A 342-amino-acid polypeptide reads, in one-letter code: MVSVTRSVFGDLPSGAGTVEKFQLQSDQLRVDIISWGCTITALEVKDRQGRASDVVLGFAELKEYLQKHPYFGAVVGRVANRIAKGTFTLDGKEYKLAINNGPNSLHGGVRGFDKVLWTPRVLSNGIEFSRVSPDGEEGYPGELKVWVTYTLDGGELVVNYRAQASQTTPVNLTNHSYFNLAGQGSPNIYDHEVTIEADAFLPVDETLIPTGEIAPVQGTAFDLRKPVELGKHLQEFHINGFDHNFCLKRSKEKQFCARVHHAGSGRVLEVYTTQPGIQFYTGNFLDGTLKGKTGAVYPKHSGFCLETQNWPNAVNQPHFPPVLLKPGEEYNHTTWFVFSVA.

Ser14 carries the phosphoserine modification. Beta-D-galactose is bound by residues 81–82 (NR) and His107. The residue at position 124 (Ser124) is a Phosphoserine. His176 acts as the Proton donor in catalysis. Beta-D-galactose-binding positions include 176–178 (HSY), Asp243, Gln279, and Glu307. The Proton acceptor role is filled by Glu307.

The protein belongs to the aldose epimerase family. Monomer.

The protein resides in the cytoplasm. It catalyses the reaction alpha-D-galactose = beta-D-galactose. The catalysed reaction is alpha-D-glucose = beta-D-glucose. It participates in carbohydrate metabolism; hexose metabolism. The protein operates within carbohydrate metabolism; galactose metabolism. In terms of biological role, mutarotase that catalyzes the interconversion of beta-D-galactose and alpha-D-galactose during galactose metabolism. Beta-D-galactose is metabolized in the liver into glucose 1-phosphate, the primary metabolic fuel, by the action of four enzymes that constitute the Leloir pathway: GALM, GALK1 (galactokinase), GALT (galactose-1-phosphate uridylyltransferase) and GALE (UDP-galactose-4'-epimerase). Involved in the maintenance of the equilibrium between the beta- and alpha-anomers of galactose, therefore ensuring a sufficient supply of the alpha-anomer for GALK1. Also active on D-glucose although shows a preference for galactose over glucose. This is Galactose mutarotase (GALM) from Sus scrofa (Pig).